Consider the following 208-residue polypeptide: Ribosomal RNA large subunit methyltransferase E (208 aa).

The S-adenosyl-L-methionine site is built by Gly-62, Trp-64, Asp-82, Asp-98, and Asp-123. Lys-163 functions as the Proton acceptor in the catalytic mechanism.

The protein belongs to the class I-like SAM-binding methyltransferase superfamily. RNA methyltransferase RlmE family.

The protein localises to the cytoplasm. The enzyme catalyses uridine(2552) in 23S rRNA + S-adenosyl-L-methionine = 2'-O-methyluridine(2552) in 23S rRNA + S-adenosyl-L-homocysteine + H(+). In terms of biological role, specifically methylates the uridine in position 2552 of 23S rRNA at the 2'-O position of the ribose in the fully assembled 50S ribosomal subunit. This is Ribosomal RNA large subunit methyltransferase E from Glaesserella parasuis serovar 5 (strain SH0165) (Haemophilus parasuis).